The following is a 120-amino-acid chain: Cell cycle protein GpsB (120 aa).

The stretch at 34–74 forms a coiled coil; sequence LDDVIKDYDTYNKELERLNDENERLRAKVDELNRQVEVGSS. The disordered stretch occupies residues 69–90; it reads VEVGSSMSNQTASRQPVSSATN. Polar residues predominate over residues 71-90; sequence VGSSMSNQTASRQPVSSATN.

It belongs to the GpsB family. In terms of assembly, forms polymers through the coiled coil domains. Interacts with PBP1, MreC and EzrA.

Its subcellular location is the cytoplasm. Functionally, divisome component that associates with the complex late in its assembly, after the Z-ring is formed, and is dependent on DivIC and PBP2B for its recruitment to the divisome. Together with EzrA, is a key component of the system that regulates PBP1 localization during cell cycle progression. Its main role could be the removal of PBP1 from the cell pole after pole maturation is completed. Also contributes to the recruitment of PBP1 to the division complex. Not essential for septum formation. This Limosilactobacillus reuteri (strain DSM 20016) (Lactobacillus reuteri) protein is Cell cycle protein GpsB.